The primary structure comprises 336 residues: Nicotinate-nucleotide--dimethylbenzimidazole phosphoribosyltransferase (336 aa).

Glu304 (proton acceptor) is an active-site residue.

The protein belongs to the CobT family.

It catalyses the reaction 5,6-dimethylbenzimidazole + nicotinate beta-D-ribonucleotide = alpha-ribazole 5'-phosphate + nicotinate + H(+). Its pathway is nucleoside biosynthesis; alpha-ribazole biosynthesis; alpha-ribazole from 5,6-dimethylbenzimidazole: step 1/2. Functionally, catalyzes the synthesis of alpha-ribazole-5'-phosphate from nicotinate mononucleotide (NAMN) and 5,6-dimethylbenzimidazole (DMB). The polypeptide is Nicotinate-nucleotide--dimethylbenzimidazole phosphoribosyltransferase (Mesorhizobium japonicum (strain LMG 29417 / CECT 9101 / MAFF 303099) (Mesorhizobium loti (strain MAFF 303099))).